An 87-amino-acid chain; its full sequence is Small ribosomal subunit protein bS16 (87 aa).

The protein belongs to the bacterial ribosomal protein bS16 family.

The sequence is that of Small ribosomal subunit protein bS16 from Ehrlichia chaffeensis (strain ATCC CRL-10679 / Arkansas).